The primary structure comprises 190 residues: dTTP/UTP pyrophosphatase (190 aa).

Asp-67 serves as the catalytic Proton acceptor.

It belongs to the Maf family. YhdE subfamily. A divalent metal cation is required as a cofactor.

Its subcellular location is the cytoplasm. The catalysed reaction is dTTP + H2O = dTMP + diphosphate + H(+). The enzyme catalyses UTP + H2O = UMP + diphosphate + H(+). Nucleoside triphosphate pyrophosphatase that hydrolyzes dTTP and UTP. May have a dual role in cell division arrest and in preventing the incorporation of modified nucleotides into cellular nucleic acids. The chain is dTTP/UTP pyrophosphatase from Aquifex aeolicus (strain VF5).